Reading from the N-terminus, the 305-residue chain is rRNA 2'-O-methyltransferase fibrillarin (305 aa).

Residues 1–70 (MAYTPGSRGG…SGGRGGAKGG (70 aa)) are disordered. Positions 7–69 (SRGGRGGSRG…SSGGRGGAKG (63 aa)) are enriched in gly residues. 2 positions are modified to phosphoserine: Ser111 and Ser114. S-adenosyl-L-methionine is bound by residues 160 to 161 (TS), 179 to 180 (EF), 204 to 205 (DA), and 224 to 227 (DVAQ).

The protein belongs to the methyltransferase superfamily. Fibrillarin family. Component of box C/D small nucleolar ribonucleoprotein (snoRNP) particles. In terms of processing, by homology to other fibrillarins, some or all of the N-terminal domain arginines are modified to asymmetric dimethylarginine (DMA).

Its subcellular location is the nucleus. The protein localises to the nucleolus. It catalyses the reaction L-glutaminyl-[histone H2A] + S-adenosyl-L-methionine = N(5)-methyl-L-glutaminyl-[histone H2A] + S-adenosyl-L-homocysteine + H(+). In terms of biological role, S-adenosyl-L-methionine-dependent methyltransferase that has the ability to methylate both RNAs and proteins. Involved in pre-rRNA processing by catalyzing the site-specific 2'-hydroxyl methylation of ribose moieties in pre-ribosomal RNA. Site specificity is provided by a guide RNA that base pairs with the substrate. Methylation occurs at a characteristic distance from the sequence involved in base pairing with the guide RNA. Also acts as a protein methyltransferase by mediating methylation of 'Gln-105' of histone H2A (H2AQ105me), a modification that impairs binding of the FACT complex and is specifically present at 35S ribosomal DNA locus. The chain is rRNA 2'-O-methyltransferase fibrillarin (fib1) from Schizosaccharomyces pombe (strain 972 / ATCC 24843) (Fission yeast).